The chain runs to 350 residues: D-alanine--D-alanine ligase (350 aa).

The region spanning 143-344 (KRILSTFGIS…FKSLINKLIL (202 aa)) is the ATP-grasp domain. 172 to 227 (INNIKFPCCIKPSNQGSSFGVNVANDFISLKESIDVAFLYSKKILIEPFIQGREIE) contacts ATP. Positions 298, 311, and 313 each coordinate Mg(2+).

The protein belongs to the D-alanine--D-alanine ligase family. Requires Mg(2+) as cofactor. Mn(2+) is required as a cofactor.

It is found in the cytoplasm. The catalysed reaction is 2 D-alanine + ATP = D-alanyl-D-alanine + ADP + phosphate + H(+). It participates in cell wall biogenesis; peptidoglycan biosynthesis. In terms of biological role, cell wall formation. In Wigglesworthia glossinidia brevipalpis, this protein is D-alanine--D-alanine ligase.